The sequence spans 296 residues: Ribonuclease HIII (296 aa).

Residues 80–296 (LALIGSDEVG…NTKKAYQRLK (217 aa)) enclose the RNase H type-2 domain. Residues aspartate 86, glutamate 87, and aspartate 191 each contribute to the a divalent metal cation site.

This sequence belongs to the RNase HII family. RnhC subfamily. Requires Mn(2+) as cofactor. The cofactor is Mg(2+).

The protein resides in the cytoplasm. It carries out the reaction Endonucleolytic cleavage to 5'-phosphomonoester.. Its function is as follows. Endonuclease that specifically degrades the RNA of RNA-DNA hybrids. The chain is Ribonuclease HIII from Streptococcus thermophilus (strain CNRZ 1066).